The following is an 857-amino-acid chain: Glucans biosynthesis glucosyltransferase H (857 aa).

6 helical membrane passes run 142–162, 196–216, 515–535, 572–592, 606–626, and 682–702; these read ILLA…KGIL, ILIL…TALM, VFLT…FLVL, LFST…ILIW, TLSM…RMIF, and FLWW…VSVI.

It belongs to the glycosyltransferase 2 family. OpgH subfamily.

It is found in the cell inner membrane. It participates in glycan metabolism; osmoregulated periplasmic glucan (OPG) biosynthesis. Its function is as follows. Involved in the biosynthesis of osmoregulated periplasmic glucans (OPGs). The protein is Glucans biosynthesis glucosyltransferase H of Pseudomonas putida (strain ATCC 700007 / DSM 6899 / JCM 31910 / BCRC 17059 / LMG 24140 / F1).